Consider the following 66-residue polypeptide: Large ribosomal subunit protein bL33c (66 aa).

Belongs to the bacterial ribosomal protein bL33 family.

The protein resides in the plastid. It is found in the chloroplast. The chain is Large ribosomal subunit protein bL33c from Angiopteris evecta (Mule's foot fern).